The sequence spans 127 residues: Mating pheromone 4 (127 aa).

Positions 1–16 (MKAIFIILAILMVTQA) are cleaved as a signal peptide. A propeptide spanning residues 17-42 (FKMTSKVKSMNMSRNMSKNTSTLGTK) is cleaved from the precursor.

It is found in the secreted. Functionally, mating ciliate pheromones (or gamones) are diffusible extracellular communication signals that distinguish different intraspecific classes of cells commonly referred to as 'mating types'. They prepare the latter for conjugation by changing their cell surface properties. The polypeptide is Mating pheromone 4 (PHR4) (Euplotoides octocarinatus (Freshwater ciliate)).